The primary structure comprises 147 residues: MAIERTLSIIKPDGVEKGIIGKIIGRFEEKGLKPVAIRLTQLSKAEAEGFYAVHKARPFFGDLVKFMTSGPVVLMVLEGENAVARNREIMGATDPKKADAGTIRKDFATDIEKNTVHGSDSAENAKIEVSYFFPEVQVHAYEWKKLA.

Residues Lys-11, Phe-59, Arg-87, Thr-93, Arg-104, and Asn-114 each coordinate ATP. The active-site Pros-phosphohistidine intermediate is the His-117.

It belongs to the NDK family. Homotetramer. Mg(2+) serves as cofactor.

The protein localises to the cytoplasm. It catalyses the reaction a 2'-deoxyribonucleoside 5'-diphosphate + ATP = a 2'-deoxyribonucleoside 5'-triphosphate + ADP. It carries out the reaction a ribonucleoside 5'-diphosphate + ATP = a ribonucleoside 5'-triphosphate + ADP. Functionally, major role in the synthesis of nucleoside triphosphates other than ATP. The ATP gamma phosphate is transferred to the NDP beta phosphate via a ping-pong mechanism, using a phosphorylated active-site intermediate. The chain is Nucleoside diphosphate kinase from Anaeromyxobacter sp. (strain K).